The sequence spans 360 residues: Histidinol-phosphate aminotransferase (360 aa).

An N6-(pyridoxal phosphate)lysine modification is found at Lys-221.

This sequence belongs to the class-II pyridoxal-phosphate-dependent aminotransferase family. Histidinol-phosphate aminotransferase subfamily. As to quaternary structure, homodimer. It depends on pyridoxal 5'-phosphate as a cofactor.

The catalysed reaction is L-histidinol phosphate + 2-oxoglutarate = 3-(imidazol-4-yl)-2-oxopropyl phosphate + L-glutamate. It participates in amino-acid biosynthesis; L-histidine biosynthesis; L-histidine from 5-phospho-alpha-D-ribose 1-diphosphate: step 7/9. The protein is Histidinol-phosphate aminotransferase of Desulfitobacterium hafniense (strain DSM 10664 / DCB-2).